The chain runs to 351 residues: Phosphoribosylformylglycinamidine cyclo-ligase (351 aa).

The protein belongs to the AIR synthase family.

It is found in the cytoplasm. It catalyses the reaction 2-formamido-N(1)-(5-O-phospho-beta-D-ribosyl)acetamidine + ATP = 5-amino-1-(5-phospho-beta-D-ribosyl)imidazole + ADP + phosphate + H(+). It participates in purine metabolism; IMP biosynthesis via de novo pathway; 5-amino-1-(5-phospho-D-ribosyl)imidazole from N(2)-formyl-N(1)-(5-phospho-D-ribosyl)glycinamide: step 2/2. This is Phosphoribosylformylglycinamidine cyclo-ligase from Azotobacter vinelandii (strain DJ / ATCC BAA-1303).